We begin with the raw amino-acid sequence, 235 residues long: High mobility group protein 1.2 (235 aa).

Residues 1 to 34 (MNSGYSANIFPSSSSPTLYQSHQLQPNPSATMYQ) show a composition bias toward polar residues. Residues 1–47 (MNSGYSANIFPSSSSPTLYQSHQLQPNPSATMYQATPRDMGKPPVRG) are disordered. DNA-binding regions (HMG box) lie at residues 47 to 117 (GKTS…AAYG) and 135 to 203 (PKRA…RNYK).

It belongs to the HMGB family.

It is found in the nucleus. This is High mobility group protein 1.2 (hmg-1.2) from Caenorhabditis elegans.